The primary structure comprises 342 residues: Holliday junction branch migration complex subunit RuvB (342 aa).

The large ATPase domain (RuvB-L) stretch occupies residues 1 to 179 (MTNILSPEKS…FGIPMRLNFY (179 aa)). ATP-binding positions include Ile-18, Arg-19, Gly-60, Lys-63, Thr-64, Thr-65, 126 to 128 (EDF), Arg-169, Tyr-179, and Arg-216. Thr-64 lines the Mg(2+) pocket. Positions 180-250 (NTEELKQVLN…ICDFGLKRLT (71 aa)) are small ATPAse domain (RuvB-S). A head domain (RuvB-H) region spans residues 253–342 (SIGLDSNDYR…NQLNILNENE (90 aa)). Arg-289, Arg-308, and Arg-313 together coordinate DNA.

The protein belongs to the RuvB family. As to quaternary structure, homohexamer. Forms an RuvA(8)-RuvB(12)-Holliday junction (HJ) complex. HJ DNA is sandwiched between 2 RuvA tetramers; dsDNA enters through RuvA and exits via RuvB. An RuvB hexamer assembles on each DNA strand where it exits the tetramer. Each RuvB hexamer is contacted by two RuvA subunits (via domain III) on 2 adjacent RuvB subunits; this complex drives branch migration. In the full resolvosome a probable DNA-RuvA(4)-RuvB(12)-RuvC(2) complex forms which resolves the HJ.

The protein resides in the cytoplasm. It catalyses the reaction ATP + H2O = ADP + phosphate + H(+). Participates in UV-tolerance of Synechocystis PCC 6803. Functionally, the RuvA-RuvB-RuvC complex processes Holliday junction (HJ) DNA during genetic recombination and DNA repair, while the RuvA-RuvB complex plays an important role in the rescue of blocked DNA replication forks via replication fork reversal (RFR). RuvA specifically binds to HJ cruciform DNA, conferring on it an open structure. The RuvB hexamer acts as an ATP-dependent pump, pulling dsDNA into and through the RuvAB complex. RuvB forms 2 homohexamers on either side of HJ DNA bound by 1 or 2 RuvA tetramers; 4 subunits per hexamer contact DNA at a time. Coordinated motions by a converter formed by DNA-disengaged RuvB subunits stimulates ATP hydrolysis and nucleotide exchange. Immobilization of the converter enables RuvB to convert the ATP-contained energy into a lever motion, pulling 2 nucleotides of DNA out of the RuvA tetramer per ATP hydrolyzed, thus driving DNA branch migration. The RuvB motors rotate together with the DNA substrate, which together with the progressing nucleotide cycle form the mechanistic basis for DNA recombination by continuous HJ branch migration. Branch migration allows RuvC to scan DNA until it finds its consensus sequence, where it cleaves and resolves cruciform DNA. This is Holliday junction branch migration complex subunit RuvB from Rickettsia prowazekii (strain Madrid E).